We begin with the raw amino-acid sequence, 41 residues long: Histone H3.2 (41 aa).

The interval 1-41 (MARTKQTARKSTGAKAPRKQLASKAARKSAPATGGIKKPHR) is disordered.

The protein belongs to the histone H3 family. The nucleosome is a histone octamer containing two molecules each of H2A, H2B, H3 and H4 assembled in one H3-H4 heterotetramer and two H2A-H2B heterodimers. The octamer wraps approximately 147 bp of DNA.

Its subcellular location is the nucleus. It is found in the chromosome. Core component of nucleosome. Nucleosomes wrap and compact DNA into chromatin, limiting DNA accessibility to the cellular machineries which require DNA as a template. Histones thereby play a central role in transcription regulation, DNA repair, DNA replication and chromosomal stability. DNA accessibility is regulated via a complex set of post-translational modifications of histones, also called histone code, and nucleosome remodeling. In Tetrahymena australis, this protein is Histone H3.2.